A 254-amino-acid chain; its full sequence is Putative epimerase LsrE (254 aa).

Residues 14 to 34 (VALLASYPLSVGILAGQWIAL) traverse the membrane as a helical segment. A divalent metal cation-binding residues include H50, D52, and H81. Catalysis depends on D52, which acts as the Proton acceptor. Substrate contacts are provided by residues H81, 166–169 (GYGS), 199–201 (DGS), and 221–222 (GS). Residue D199 coordinates a divalent metal cation. Residue D199 is the Proton donor of the active site.

Belongs to the ribulose-phosphate 3-epimerase family. Requires a divalent metal cation as cofactor.

It is found in the cell membrane. This Salmonella paratyphi A (strain ATCC 9150 / SARB42) protein is Putative epimerase LsrE (lsrE).